The following is a 291-amino-acid chain: 11-beta-hydroxysteroid dehydrogenase 1 (291 aa).

Residues 1-7 (MAFMKTH) lie on the Cytoplasmic side of the membrane. The helical; Signal-anchor for type II membrane protein transmembrane segment at 8-24 (LLPILGLFMAYYYYSAY) threads the bilayer. Residues 25 to 291 (EEFRPEMLQG…TSYSTDGLIN (267 aa)) lie on the Lumenal side of the membrane. NADP(+) is bound by residues 41-67 (GASK…TARS), 92-93 (TM), and 119-121 (NHI). N-linked (GlcNAc...) asparagine glycans are attached at residues Asn-123 and Asn-162. Ser-170 is a substrate binding site. The active-site Proton acceptor is Tyr-183. Residue 183–187 (YSASK) coordinates NADP(+). The N-linked (GlcNAc...) asparagine glycan is linked to Asn-207. NADP(+) is bound at residue 218 to 222 (IDTDT).

The protein belongs to the short-chain dehydrogenases/reductases (SDR) family. As to quaternary structure, homodimer. As to expression, abundantly expressed in the liver, followed by fibroblasts, also detected in the brain, lung, heart, and ovary, and in smaller amounts in kidney, skin, and spleen.

Its subcellular location is the endoplasmic reticulum membrane. It catalyses the reaction an 11beta-hydroxysteroid + NADP(+) = an 11-oxosteroid + NADPH + H(+). The enzyme catalyses cortisone + NADPH + H(+) = cortisol + NADP(+). It carries out the reaction corticosterone + NADP(+) = 11-dehydrocorticosterone + NADPH + H(+). The catalysed reaction is a 7beta-hydroxysteroid + NADP(+) = a 7-oxosteroid + NADPH + H(+). It catalyses the reaction 7-oxocholesterol + NADPH + H(+) = 7beta-hydroxycholesterol + NADP(+). The enzyme catalyses chenodeoxycholate + NADP(+) = 7-oxolithocholate + NADPH + H(+). It carries out the reaction 7-oxolithocholate + NADPH + H(+) = ursodeoxycholate + NADP(+). The catalysed reaction is glycochenodeoxycholate + NADP(+) = 7-oxoglycolithocholate + NADPH + H(+). It catalyses the reaction taurochenodeoxycholate + NADP(+) = 7-oxotaurolithocholate + NADPH + H(+). The enzyme catalyses tauroursodeoxycholate + NADP(+) = 7-oxotaurolithocholate + NADPH + H(+). It carries out the reaction glycoursodeoxycholate + NADP(+) = 7-oxoglycolithocholate + NADPH + H(+). The catalysed reaction is 7-oxopregnenolone + NADPH + H(+) = 7beta-hydroxypregnenolone + NADP(+). It catalyses the reaction 3beta,7alpha-dihydroxyandrost-5-en-17-one + NADP(+) = 3beta-hydroxy-5-androstene-7,17-dione + NADPH + H(+). The enzyme catalyses 3beta-hydroxy-5-androstene-7,17-dione + NADPH + H(+) = 3beta,7beta-dihydroxyandrost-5-en-17-one + NADP(+). It carries out the reaction 3beta-hydroxy-5alpha-androstane-7,17-dione + NADPH + H(+) = 3beta,7beta-dihydroxy-5alpha-androstan-17-one + NADP(+). The protein operates within steroid metabolism. Functionally, controls the reversible conversion of biologically active glucocorticoids such as cortisone to cortisol, and 11-dehydrocorticosterone to corticosterone in the presence of NADP(H). Participates in the corticosteroid receptor-mediated anti-inflammatory response, as well as metabolic and homeostatic processes. Bidirectional in vitro, predominantly functions as a reductase in vivo, thereby increasing the concentration of active glucocorticoids. It has broad substrate specificity, besides glucocorticoids, it accepts other steroid and sterol substrates. Interconverts 7-oxo- and 7-hydroxy-neurosteroids such as 7-oxopregnenolone and 7beta-hydroxypregnenolone, 7-oxodehydroepiandrosterone (3beta-hydroxy-5-androstene-7,17-dione) and 7beta-hydroxydehydroepiandrosterone (3beta,7beta-dihydroxyandrost-5-en-17-one), among others. Catalyzes the stereo-specific conversion of the major dietary oxysterol, 7-ketocholesterol (7-oxocholesterol), into the more polar 7-beta-hydroxycholesterol metabolite. 7-oxocholesterol is one of the most important oxysterols, it participates in several events such as induction of apoptosis, accumulation in atherosclerotic lesions, lipid peroxidation, and induction of foam cell formation. Mediates the 7-oxo reduction of 7-oxolithocholate mainly to chenodeoxycholate, and to a lesser extent to ursodeoxycholate, both in its free form and when conjugated to glycine or taurine, providing a link between glucocorticoid activation and bile acid metabolism. Catalyzes the synthesis of 7-beta-25-dihydroxycholesterol from 7-oxo-25-hydroxycholesterol in vitro, which acts as a ligand for the G-protein-coupled receptor (GPCR) Epstein-Barr virus-induced gene 2 (EBI2) and may thereby regulate immune cell migration. The polypeptide is 11-beta-hydroxysteroid dehydrogenase 1 (HSD11B1) (Saimiri sciureus (Common squirrel monkey)).